A 133-amino-acid chain; its full sequence is Protransforming growth factor alpha (133 aa).

Residues 1–23 (MVPSAGQLALFALGIFLAVCQAL) form the signal peptide. The propeptide at 24–38 (ENSTSALSDPPVAAA) is removed in mature form. At 24–97 (ENSTSALSDP…AVVAASQKKQ (74 aa)) the chain is on the extracellular side. Asn-25 carries an N-linked (GlcNAc...) asparagine glycan. The EGF-like domain maps to 42–82 (HFNDCPDSHTQFCFHGTCRFLLQEEKPACVCHSGYVGARCE). Disulfide bonds link Cys-46-Cys-59, Cys-54-Cys-70, and Cys-72-Cys-81. Positions 89-133 (VVAASQKKQAITALVVVTIVALAVLIITCVLIHCCEVRKHSVVVP) are cleaved as a propeptide — removed in mature form. The helical transmembrane segment at 98–120 (AITALVVVTIVALAVLIITCVLI) threads the bilayer. Residues 121-133 (HCCEVRKHSVVVP) lie on the Cytoplasmic side of the membrane.

Interacts with the PDZ domains of MAGI3, SDCBP and SNTA1. The interaction with SDCBP, is required for the targeting to the cell surface. In the endoplasmic reticulum, in its immature form (i.e. with a prosegment and lacking full N-glycosylation), interacts with CNIH. In the Golgi apparatus, may form a complex with CNIH and GORASP2. Interacts (via cytoplasmic C-terminal domain) with NKD2. Skin.

The protein localises to the secreted. It is found in the extracellular space. It localises to the cell membrane. Its function is as follows. TGF alpha is a mitogenic polypeptide that is able to bind to the EGF receptor/EGFR and to act synergistically with TGF beta to promote anchorage-independent cell proliferation in soft agar. The sequence is that of Protransforming growth factor alpha (TGFA) from Ovis aries (Sheep).